The chain runs to 275 residues: MANYTAADVKRLRELTGSGMMACKNALADADGDFDKAVEQLRIKGAKDVGKRAERTTAEGLVVAKDGVMIEINCETDFVAKNDEFIKLADEIVTVAAAGKPADLDALKALELDGKTIDTVIAEQSAKIGEKLELSRVASFDGPVAVYLHKRSSDLPPAVGVLIEYTGEGDAAAEAARGAAMQVAALKAKYVTRDEVPAEIVASERHIAEETARAEGKPEQALPKIIEGRVNGFFKDVVLTEQSSVTDSKKTVKAILDEAGVTIKRFVRFEVGASA.

The tract at residues 76–79 is involved in Mg(2+) ion dislocation from EF-Tu; the sequence is TDFV.

This sequence belongs to the EF-Ts family.

The protein localises to the cytoplasm. Functionally, associates with the EF-Tu.GDP complex and induces the exchange of GDP to GTP. It remains bound to the aminoacyl-tRNA.EF-Tu.GTP complex up to the GTP hydrolysis stage on the ribosome. This Rhodococcus erythropolis (strain PR4 / NBRC 100887) protein is Elongation factor Ts.